The following is a 160-amino-acid chain: Ribosomal RNA large subunit methyltransferase H (160 aa).

Gly108 contacts S-adenosyl-L-methionine.

Belongs to the RNA methyltransferase RlmH family. In terms of assembly, homodimer.

It is found in the cytoplasm. It catalyses the reaction pseudouridine(1915) in 23S rRNA + S-adenosyl-L-methionine = N(3)-methylpseudouridine(1915) in 23S rRNA + S-adenosyl-L-homocysteine + H(+). Functionally, specifically methylates the pseudouridine at position 1915 (m3Psi1915) in 23S rRNA. The polypeptide is Ribosomal RNA large subunit methyltransferase H (Rhodopseudomonas palustris (strain BisA53)).